A 102-amino-acid polypeptide reads, in one-letter code: Auxin-responsive protein SAUR68 (102 aa).

This sequence belongs to the ARG7 family.

It is found in the cell membrane. In terms of biological role, may promote auxin-stimulated organ elongation, such as hypocotyls, stamen filaments and petals. The chain is Auxin-responsive protein SAUR68 from Arabidopsis thaliana (Mouse-ear cress).